The following is a 223-amino-acid chain: 2-C-methyl-D-erythritol 4-phosphate cytidylyltransferase (223 aa).

The protein belongs to the IspD/TarI cytidylyltransferase family. IspD subfamily.

It carries out the reaction 2-C-methyl-D-erythritol 4-phosphate + CTP + H(+) = 4-CDP-2-C-methyl-D-erythritol + diphosphate. It functions in the pathway isoprenoid biosynthesis; isopentenyl diphosphate biosynthesis via DXP pathway; isopentenyl diphosphate from 1-deoxy-D-xylulose 5-phosphate: step 2/6. In terms of biological role, catalyzes the formation of 4-diphosphocytidyl-2-C-methyl-D-erythritol from CTP and 2-C-methyl-D-erythritol 4-phosphate (MEP). This is 2-C-methyl-D-erythritol 4-phosphate cytidylyltransferase from Prochlorococcus marinus (strain AS9601).